Reading from the N-terminus, the 236-residue chain is 2,3,4,5-tetrahydropyridine-2,6-dicarboxylate N-acetyltransferase (236 aa).

This sequence belongs to the transferase hexapeptide repeat family. DapH subfamily.

It carries out the reaction (S)-2,3,4,5-tetrahydrodipicolinate + acetyl-CoA + H2O = L-2-acetamido-6-oxoheptanedioate + CoA. It participates in amino-acid biosynthesis; L-lysine biosynthesis via DAP pathway; LL-2,6-diaminopimelate from (S)-tetrahydrodipicolinate (acetylase route): step 1/3. Functionally, catalyzes the transfer of an acetyl group from acetyl-CoA to tetrahydrodipicolinate. The chain is 2,3,4,5-tetrahydropyridine-2,6-dicarboxylate N-acetyltransferase from Listeria monocytogenes serotype 4b (strain CLIP80459).